Here is an 830-residue protein sequence, read N- to C-terminus: DNA helicase MCM8 (830 aa).

Residues 392 to 599 (LLKLIVNSLC…QHDHLLSEHV (208 aa)) enclose the MCM domain. 444–451 (GDPGLGKS) contacts ATP. Position 620 is a phosphoserine (Ser-620).

The protein belongs to the MCM family. Component of the MCM8-MCM9 complex, which forms a hexamer composed of MCM8 and MCM9. Interacts with the DNA mismatch repair (MMR) complex composed at least of MSH2, MSH3, MSH6, PMS1 and MLH1. Interacts with RAD51; the interaction recruits RAD51 to DNA damage sites. Interacts with the MRN complex composed of MRE11, RAD50 and NBN/NBS1. Interacts with CDC6 and ORC2. Interacts with HROB; the interaction recruits the MCM8-MCM9 complex to DNA damage sites.

Its subcellular location is the nucleus. It localises to the chromosome. The enzyme catalyses ATP + H2O = ADP + phosphate + H(+). Its function is as follows. Component of the MCM8-MCM9 complex, a complex involved in the repair of double-stranded DNA breaks (DBSs) and DNA interstrand cross-links (ICLs) by homologous recombination (HR). Required for DNA resection by the MRE11-RAD50-NBN/NBS1 (MRN) complex by recruiting the MRN complex to the repair site and by promoting the complex nuclease activity. Probably by regulating the localization of the MNR complex, indirectly regulates the recruitment of downstream effector RAD51 to DNA damage sites including DBSs and ICLs. The MCM8-MCM9 complex is dispensable for DNA replication and S phase progression. However, may play a non-essential for DNA replication: may be involved in the activation of the prereplicative complex (pre-RC) during G(1) phase by recruiting CDC6 to the origin recognition complex (ORC). Probably by regulating HR, plays a key role during gametogenesis. Stabilizes MCM9 protein. The polypeptide is DNA helicase MCM8 (Mcm8) (Rattus norvegicus (Rat)).